The chain runs to 422 residues: Aspartate--tRNA(Asp/Asn) ligase (422 aa).

E158 lines the L-aspartate pocket. The tract at residues 180 to 183 (QLYK) is aspartate. L-aspartate is bound at residue R201. Residues 201–203 (RME), 209–211 (RHL), and E345 contribute to the ATP site. L-aspartate contacts are provided by S348 and R352. Position 393 to 396 (393 to 396 (GAER)) interacts with ATP.

It belongs to the class-II aminoacyl-tRNA synthetase family. Type 2 subfamily. In terms of assembly, homodimer. Makes part of a ribonucleoprotein particle (RNP) called transamidosome that allows channelling of the aa-tRNA from non-discriminating aspartyl-tRNA synthetase active site to the GatCAB amidotransferase site. The transamidosome complex is formed by two GatCABs, one dimeric ND-AspRSs and two tRNAs(Asn) molecules.

It localises to the cytoplasm. The enzyme catalyses tRNA(Asx) + L-aspartate + ATP = L-aspartyl-tRNA(Asx) + AMP + diphosphate. Functionally, aspartyl-tRNA synthetase with relaxed tRNA specificity since it is able to aspartylate not only its cognate tRNA(Asp) but also tRNA(Asn) with similar efficiencies. Reaction proceeds in two steps: L-aspartate is first activated by ATP to form Asp-AMP and then transferred to the acceptor end of tRNA(Asp/Asn). This Thermus thermophilus (strain ATCC 27634 / DSM 579 / HB8) protein is Aspartate--tRNA(Asp/Asn) ligase (aspS2).